The primary structure comprises 151 residues: Deoxyuridine 5'-triphosphate nucleotidohydrolase (151 aa).

Substrate-binding positions include 70–72, asparagine 83, and 87–89; these read RSG and TID.

The protein belongs to the dUTPase family. The cofactor is Mg(2+).

The catalysed reaction is dUTP + H2O = dUMP + diphosphate + H(+). The protein operates within pyrimidine metabolism; dUMP biosynthesis; dUMP from dCTP (dUTP route): step 2/2. In terms of biological role, this enzyme is involved in nucleotide metabolism: it produces dUMP, the immediate precursor of thymidine nucleotides and it decreases the intracellular concentration of dUTP so that uracil cannot be incorporated into DNA. The protein is Deoxyuridine 5'-triphosphate nucleotidohydrolase of Ruegeria pomeroyi (strain ATCC 700808 / DSM 15171 / DSS-3) (Silicibacter pomeroyi).